The following is a 389-amino-acid chain: Chorismate synthase (389 aa).

Arg-40 and Arg-46 together coordinate NADP(+). Residues 131 to 133, 252 to 253, Gly-297, 312 to 316, and Arg-338 each bind FMN; these read RSS, NA, and KPIPT.

It belongs to the chorismate synthase family. In terms of assembly, homotetramer. FMNH2 is required as a cofactor.

The enzyme catalyses 5-O-(1-carboxyvinyl)-3-phosphoshikimate = chorismate + phosphate. It participates in metabolic intermediate biosynthesis; chorismate biosynthesis; chorismate from D-erythrose 4-phosphate and phosphoenolpyruvate: step 7/7. Catalyzes the anti-1,4-elimination of the C-3 phosphate and the C-6 proR hydrogen from 5-enolpyruvylshikimate-3-phosphate (EPSP) to yield chorismate, which is the branch point compound that serves as the starting substrate for the three terminal pathways of aromatic amino acid biosynthesis. This reaction introduces a second double bond into the aromatic ring system. The chain is Chorismate synthase from Lactiplantibacillus plantarum (strain ATCC BAA-793 / NCIMB 8826 / WCFS1) (Lactobacillus plantarum).